We begin with the raw amino-acid sequence, 362 residues long: 3-dehydroquinate synthase (362 aa).

Residues 71–76 (DGEQYK), 105–109 (GVVGD), 129–130 (TT), lysine 142, lysine 151, and 169–172 (CLKT) each bind NAD(+). Residues glutamate 184, histidine 247, and histidine 264 each contribute to the Zn(2+) site.

It belongs to the sugar phosphate cyclases superfamily. Dehydroquinate synthase family. The cofactor is Co(2+). Zn(2+) is required as a cofactor. Requires NAD(+) as cofactor.

The protein resides in the cytoplasm. The catalysed reaction is 7-phospho-2-dehydro-3-deoxy-D-arabino-heptonate = 3-dehydroquinate + phosphate. It functions in the pathway metabolic intermediate biosynthesis; chorismate biosynthesis; chorismate from D-erythrose 4-phosphate and phosphoenolpyruvate: step 2/7. In terms of biological role, catalyzes the conversion of 3-deoxy-D-arabino-heptulosonate 7-phosphate (DAHP) to dehydroquinate (DHQ). The polypeptide is 3-dehydroquinate synthase (Escherichia coli O81 (strain ED1a)).